A 398-amino-acid chain; its full sequence is Carboxyaminopropylagmatine dehydrogenase (398 aa).

The protein belongs to the saccharopine dehydrogenase family.

It carries out the reaction N(1)-[(S)-3-amino-3-carboxypropyl]agmatine + NADP(+) + H2O = L-aspartate 4-semialdehyde + agmatine + NADPH + H(+). It participates in amine and polyamine biosynthesis; spermidine biosynthesis. Dehydrogenase involved in the biosynthesis of spermidine via the carboxyaminopropylagmatine (CAPA) pathway. Catalyzes the reductive condensation of agmatine and L-aspartate-beta-semialdehyde (ASA) into CAPA. Shows activity toward putrescine and 1,3-diaminopropane, but the catalytic efficiency is three to four orders of magnitude lower than that for agmatine. Cannot use cadaverine or spermidine. In Synechocystis sp. (strain ATCC 27184 / PCC 6803 / Kazusa), this protein is Carboxyaminopropylagmatine dehydrogenase.